The following is a 173-amino-acid chain: Flavodoxin 2 (173 aa).

The Flavodoxin-like domain maps to 3 to 165 (MGLFYGSSTC…RIQTWCEQIL (163 aa)).

Belongs to the flavodoxin family. FMN serves as cofactor.

Functionally, low-potential electron donor to a number of redox enzymes. The protein is Flavodoxin 2 (fldB) of Salmonella typhi.